The following is a 194-amino-acid chain: Peptidyl-tRNA hydrolase (194 aa).

Tyrosine 16 contacts tRNA. Histidine 21 acts as the Proton acceptor in catalysis. The tRNA site is built by phenylalanine 67, asparagine 69, and asparagine 115.

The protein belongs to the PTH family. Monomer.

Its subcellular location is the cytoplasm. The enzyme catalyses an N-acyl-L-alpha-aminoacyl-tRNA + H2O = an N-acyl-L-amino acid + a tRNA + H(+). Its function is as follows. Hydrolyzes ribosome-free peptidyl-tRNAs (with 1 or more amino acids incorporated), which drop off the ribosome during protein synthesis, or as a result of ribosome stalling. Functionally, catalyzes the release of premature peptidyl moieties from peptidyl-tRNA molecules trapped in stalled 50S ribosomal subunits, and thus maintains levels of free tRNAs and 50S ribosomes. This is Peptidyl-tRNA hydrolase from Escherichia coli O81 (strain ED1a).